Reading from the N-terminus, the 136-residue chain is Large-conductance mechanosensitive channel (136 aa).

A run of 2 helical transmembrane segments spans residues 9–29 (AFAS…GAAF) and 79–99 (IQTI…LKAI).

It belongs to the MscL family. In terms of assembly, homopentamer.

It is found in the cell inner membrane. Channel that opens in response to stretch forces in the membrane lipid bilayer. May participate in the regulation of osmotic pressure changes within the cell. The sequence is that of Large-conductance mechanosensitive channel from Shewanella sp. (strain ANA-3).